Here is a 153-residue protein sequence, read N- to C-terminus: Ribosomal RNA large subunit methyltransferase H (153 aa).

S-adenosyl-L-methionine contacts are provided by residues Leu70, Gly102, and 121–126; that span reads LSAMTF.

Belongs to the RNA methyltransferase RlmH family. Homodimer.

The protein resides in the cytoplasm. The catalysed reaction is pseudouridine(1915) in 23S rRNA + S-adenosyl-L-methionine = N(3)-methylpseudouridine(1915) in 23S rRNA + S-adenosyl-L-homocysteine + H(+). Specifically methylates the pseudouridine at position 1915 (m3Psi1915) in 23S rRNA. The chain is Ribosomal RNA large subunit methyltransferase H from Trichlorobacter lovleyi (strain ATCC BAA-1151 / DSM 17278 / SZ) (Geobacter lovleyi).